The sequence spans 90 residues: Small ribosomal subunit protein bS20 (90 aa).

It belongs to the bacterial ribosomal protein bS20 family.

Its function is as follows. Binds directly to 16S ribosomal RNA. This Francisella tularensis subsp. tularensis (strain FSC 198) protein is Small ribosomal subunit protein bS20.